Consider the following 456-residue polypeptide: MRNSWIKPRLGQKNITQMNFAKNGIITEEMNYVAQKENLPSSLIMEEVARGRLIIPANINHVNLEPMAIGIASKCKVNANIGASPNASDINEEVEKLRLAVKYGADTVMDLSTGGVNLDEVRQAIIKESSVPIGTVPVYQALESVHGSIDRLTEDDFLHIIEKHCQQGVDYQTIHAGLLIEHLPKVKGRITGIVSRGGGILAQWMLHHFKQNPLYTRFDDICEIFKKYDCTFSLGDSLRPGCLHDASDDAQLAELKTLGELTRRAWAHNVQVMVEGPGHVPMDQIEFNVRKQMEECSEAPFYVLGPLVTDISPGYDHISSAIGAAMAGWYGTAMLCYVTPKEHLGLPNAEDVREGLIAYKIAAHAADIARHRAGARDRDDELSHARYTFDWNKQFELSLDPERAKQYHDETLPEEIFKKAEFCSMCGPKHCPMNSKISDETLDQLNNKLAKCDIKV.

Residues Asn80, Met109, Tyr139, His175, 195-197 (SRG), 236-239 (DSLR), and Glu275 each bind substrate. His279 lines the Zn(2+) pocket. Position 302 (Tyr302) interacts with substrate. His343 is a Zn(2+) binding site. Residues Cys423, Cys426, and Cys431 each coordinate [4Fe-4S] cluster.

This sequence belongs to the ThiC family. [4Fe-4S] cluster serves as cofactor.

The catalysed reaction is 5-amino-1-(5-phospho-beta-D-ribosyl)imidazole + S-adenosyl-L-methionine = 4-amino-2-methyl-5-(phosphooxymethyl)pyrimidine + CO + 5'-deoxyadenosine + formate + L-methionine + 3 H(+). Its pathway is cofactor biosynthesis; thiamine diphosphate biosynthesis. In terms of biological role, catalyzes the synthesis of the hydroxymethylpyrimidine phosphate (HMP-P) moiety of thiamine from aminoimidazole ribotide (AIR) in a radical S-adenosyl-L-methionine (SAM)-dependent reaction. The protein is Phosphomethylpyrimidine synthase of Prochlorococcus marinus (strain MIT 9515).